Reading from the N-terminus, the 543-residue chain is Probable protein kinase UbiB (543 aa).

The 379-residue stretch at 123 to 501 folds into the Protein kinase domain; sequence DFDSQALASA…QQRQGQSRYL (379 aa). Residues 129–137 and lysine 152 contribute to the ATP site; that span reads LASASIAQV. The active-site Proton acceptor is aspartate 287. The chain crosses the membrane as a helical span at residues 517–539; it reads LADATEVSTGFIVAGALAWFIGW.

It belongs to the ABC1 family. UbiB subfamily.

It is found in the cell inner membrane. It functions in the pathway cofactor biosynthesis; ubiquinone biosynthesis [regulation]. Functionally, is probably a protein kinase regulator of UbiI activity which is involved in aerobic coenzyme Q (ubiquinone) biosynthesis. The protein is Probable protein kinase UbiB of Yersinia pseudotuberculosis serotype O:1b (strain IP 31758).